The following is a 300-amino-acid chain: MQSTLSQSPGSRFSQYMALTKPRVTQLAVFCAVIGMFLATPGMVPWHVLIGGTIGIWLLAGAAFAINCLVEQKIDAMMRRTAWRPSARGEITTPQILLFSAVLGSVGAWTLYTFTNPLTMWLTIATFVGYAVVYTLLLKPMTPQNIVIGGASGAMPPALGWAAVTGAVPGDAWILVLIIFVWTPPHFWVLALYRRKDYENAGLPMLPVTHGEKFTRLHILLYTVILFAVTLMPFISGMSGVVYLASAVLLGAVFLAYAWKIYRDYSDELARKAFRYSIVYLSLLFAALLVDHYARPLLGV.

Transmembrane regions (helical) follow at residues 24–44 (VTQL…PGMV), 46–66 (WHVL…AFAI), 94–114 (PQIL…LYTF), 118–138 (LTMW…TLLL), 146–166 (IVIG…AVTG), 172–192 (AWIL…VLAL), 224–244 (VILF…VVYL), and 278–298 (IVYL…RPLL).

Belongs to the UbiA prenyltransferase family. Protoheme IX farnesyltransferase subfamily.

It localises to the cell inner membrane. The enzyme catalyses heme b + (2E,6E)-farnesyl diphosphate + H2O = Fe(II)-heme o + diphosphate. The protein operates within porphyrin-containing compound metabolism; heme O biosynthesis; heme O from protoheme: step 1/1. Functionally, converts heme B (protoheme IX) to heme O by substitution of the vinyl group on carbon 2 of heme B porphyrin ring with a hydroxyethyl farnesyl side group. The sequence is that of Protoheme IX farnesyltransferase from Burkholderia ambifaria (strain ATCC BAA-244 / DSM 16087 / CCUG 44356 / LMG 19182 / AMMD) (Burkholderia cepacia (strain AMMD)).